The primary structure comprises 89 residues: MIDRKHYHLVGSIGKDILNNGKLPALLLIAVLASSSLVVITTYQTRRLTVEREQLLLEQNILDIEWRNLILEDNVISDQSRFEFVATEQ.

The Cytoplasmic portion of the chain corresponds to 1–22 (MIDRKHYHLVGSIGKDILNNGK). A helical transmembrane segment spans residues 23-40 (LPALLLIAVLASSSLVVI). Residues 41-89 (TTYQTRRLTVEREQLLLEQNILDIEWRNLILEDNVISDQSRFEFVATEQ) lie on the Periplasmic side of the membrane.

It belongs to the FtsL family. As to quaternary structure, part of a complex composed of FtsB, FtsL and FtsQ.

The protein localises to the cell inner membrane. Essential cell division protein. May link together the upstream cell division proteins, which are predominantly cytoplasmic, with the downstream cell division proteins, which are predominantly periplasmic. This is Cell division protein FtsL from Moranella endobia (strain PCIT).